A 264-amino-acid chain; its full sequence is Tryptophan synthase alpha chain (264 aa).

Residues Glu-49 and Asp-60 each act as proton acceptor in the active site.

This sequence belongs to the TrpA family. In terms of assembly, tetramer of two alpha and two beta chains.

It catalyses the reaction (1S,2R)-1-C-(indol-3-yl)glycerol 3-phosphate + L-serine = D-glyceraldehyde 3-phosphate + L-tryptophan + H2O. It participates in amino-acid biosynthesis; L-tryptophan biosynthesis; L-tryptophan from chorismate: step 5/5. Its function is as follows. The alpha subunit is responsible for the aldol cleavage of indoleglycerol phosphate to indole and glyceraldehyde 3-phosphate. The chain is Tryptophan synthase alpha chain from Lachnospira eligens (strain ATCC 27750 / DSM 3376 / VPI C15-48 / C15-B4) (Eubacterium eligens).